Consider the following 602-residue polypeptide: Prostaglandin G/H synthase 1 (602 aa).

The N-terminal stretch at 1–26 (MSRRSLSLWFPLLLLLLLPPTPSVLL) is a signal peptide. One can recognise an EGF-like domain in the interval 34-72 (PVNPCCYYPCQNQGVCVRFGLDNYQCDCTRTGYSGPNCT). 4 cysteine pairs are disulfide-bonded: C38/C49, C39/C161, C43/C59, and C61/C71. N-linked (GlcNAc...) asparagine glycans are attached at residues N70, N106, and N146. The Proton acceptor role is filled by H209. The active-site For cyclooxygenase activity is the Y387. Residue H390 coordinates heme b. A disulfide bridge connects residues C571 and C577.

It belongs to the prostaglandin G/H synthase family. As to quaternary structure, homodimer. Requires heme b as cofactor.

It is found in the microsome membrane. The protein resides in the endoplasmic reticulum membrane. The catalysed reaction is (5Z,8Z,11Z,14Z)-eicosatetraenoate + AH2 + 2 O2 = prostaglandin H2 + A + H2O. It carries out the reaction (5Z,8Z,11Z,14Z)-eicosatetraenoate + 2 O2 = prostaglandin G2. It catalyses the reaction prostaglandin G2 + AH2 = prostaglandin H2 + A + H2O. The enzyme catalyses (9Z,12Z)-octadecadienoate + AH2 + O2 = (9R)-hydroxy-(10E,12Z)-octadecadienoate + A + H2O. The catalysed reaction is (9Z,12Z)-octadecadienoate + AH2 + O2 = (9S)-hydroxy-(10E,12Z)-octadecadienoate + A + H2O. It carries out the reaction (9Z,12Z)-octadecadienoate + AH2 + O2 = (13S)-hydroxy-(9Z,11E)-octadecadienoate + A + H2O. It catalyses the reaction (9Z,12Z)-octadecadienoate + AH2 + O2 = (13R)-hydroxy-(9Z,11E)-octadecadienoate + A + H2O. The protein operates within lipid metabolism; prostaglandin biosynthesis. The cyclooxygenase activity is inhibited by nonsteroidal anti-inflammatory drugs (NSAIDs) including ibuprofen, flurbiprofen, ketoprofen, naproxen, flurbiprofen, anirolac, fenclofenac and diclofenac. Its function is as follows. Dual cyclooxygenase and peroxidase that plays an important role in the biosynthesis pathway of prostanoids, a class of C20 oxylipins mainly derived from arachidonate ((5Z,8Z,11Z,14Z)-eicosatetraenoate, AA, C20:4(n-6)), with a particular role in the inflammatory response. The cyclooxygenase activity oxygenates AA to the hydroperoxy endoperoxide prostaglandin G2 (PGG2), and the peroxidase activity reduces PGG2 to the hydroxy endoperoxide prostaglandin H2 (PGH2), the precursor of all 2-series prostaglandins and thromboxanes. This complex transformation is initiated by abstraction of hydrogen at carbon 13 (with S-stereochemistry), followed by insertion of molecular O2 to form the endoperoxide bridge between carbon 9 and 11 that defines prostaglandins. The insertion of a second molecule of O2 (bis-oxygenase activity) yields a hydroperoxy group in PGG2 that is then reduced to PGH2 by two electrons. Involved in the constitutive production of prostanoids in particular in the stomach and platelets. In gastric epithelial cells, it is a key step in the generation of prostaglandins, such as prostaglandin E2 (PGE2), which plays an important role in cytoprotection. In platelets, it is involved in the generation of thromboxane A2 (TXA2), which promotes platelet activation and aggregation, vasoconstriction and proliferation of vascular smooth muscle cells. Can also use linoleate (LA, (9Z,12Z)-octadecadienoate, C18:2(n-6)) as substrate and produce hydroxyoctadecadienoates (HODEs) in a regio- and stereospecific manner, being (9R)-HODE ((9R)-hydroxy-(10E,12Z)-octadecadienoate) and (13S)-HODE ((13S)-hydroxy-(9Z,11E)-octadecadienoate) its major products. This is Prostaglandin G/H synthase 1 from Mus musculus (Mouse).